The chain runs to 206 residues: Histidine biosynthesis bifunctional protein HisIE (206 aa).

The tract at residues 1–117 (MCNEPATSDV…SCFPAAPGQF (117 aa)) is phosphoribosyl-AMP cyclohydrolase. The segment at 118–206 (LGALDALVAE…AVTVLEARHR (89 aa)) is phosphoribosyl-ATP pyrophosphohydrolase.

This sequence in the N-terminal section; belongs to the PRA-CH family. In the C-terminal section; belongs to the PRA-PH family.

It is found in the cytoplasm. It catalyses the reaction 1-(5-phospho-beta-D-ribosyl)-ATP + H2O = 1-(5-phospho-beta-D-ribosyl)-5'-AMP + diphosphate + H(+). The enzyme catalyses 1-(5-phospho-beta-D-ribosyl)-5'-AMP + H2O = 1-(5-phospho-beta-D-ribosyl)-5-[(5-phospho-beta-D-ribosylamino)methylideneamino]imidazole-4-carboxamide. The protein operates within amino-acid biosynthesis; L-histidine biosynthesis; L-histidine from 5-phospho-alpha-D-ribose 1-diphosphate: step 2/9. Its pathway is amino-acid biosynthesis; L-histidine biosynthesis; L-histidine from 5-phospho-alpha-D-ribose 1-diphosphate: step 3/9. This is Histidine biosynthesis bifunctional protein HisIE (hisI) from Xylella fastidiosa (strain Temecula1 / ATCC 700964).